Consider the following 244-residue polypeptide: LOB domain-containing protein 17 (244 aa).

Residues 6–108 (SPCGACKFLR…TQLEILKQQA (103 aa)) form the LOB domain.

Belongs to the LOB domain-containing protein family. Expressed in roots, stems, leaves and flowers.

The chain is LOB domain-containing protein 17 (LBD17) from Arabidopsis thaliana (Mouse-ear cress).